The chain runs to 614 residues: Baeyer-Villiger monooxygenase peniC (614 aa).

Residues E99, 107–110, D119, and Y125 each bind FAD; that span reads TWHW. Residues 255–261, 278–279, and 398–399 contribute to the NADP(+) site; these read TGASGVQ, RT, and KR.

It belongs to the FAD-binding monooxygenase family. Requires FAD as cofactor.

It carries out the reaction gamma-lactone-2-keto[5.5.5.5]fenestrane + NADPH + O2 + H(+) = penifulvin A + NADP(+) + H2O. It functions in the pathway secondary metabolite biosynthesis; terpenoid biosynthesis. Baeyer-Villiger monooxygenase; part of the gene cluster that mediates the biosynthesis of penifulvin A, a potent insecticidal sesquiterpene that features a [5.5.5.6]dioxafenestrane ring. Within the pathway, peniC is responsible for the final regioselective Baeyer-Villiger oxidation of gamma-lactone-2-keto[5.5.5.5]fenestran between C1 and C2 to form the delta-lactone moiety of penifulvin A. The first step of the pathway is performed by the sesquiterpene cyclase peniA that generates the angular triquinane scaffold silphinene via cyclization of the linear farnesyl pyrophosphate (FPP). The cytochrome P450 monooxygenase peniB and the flavin-dependent monooxygenase peniC then catalyze a series of oxidation reactions to transform silphinene into penifulvin A. This chain is Baeyer-Villiger monooxygenase peniC, found in Penicillium patulum (Penicillium griseofulvum).